The primary structure comprises 442 residues: MLDILLLRKDLASAVARLETRKKPQAFLNVEAFQALESERKTIQMRTEELQSQRNQLSKQIGMLMGKGEKDAAEAAKAQVAAIKAELDGSATRLDQIQGELQSMLAAVPNLPHESVPVGSDESANVEVRRWSPDGPQPRSLGFTPKDHVDLGEPLGLDFDMGVKLSGSRFTVMKGGIARLHRALAQFMLDVQTQEHGYTECYVPYVVNADSLKGTGQLPKFEGDLFAAQKGGQDAEPVPDNAQLYLIPTSEVPLTNFVRDEVLAEAQLPLKLTAHTPCFRSEAGSYGRDTRGMIRQHQFDKVEMVQIVHPDKSYEALEEMTRHAEAVLQKLGLPYRVMSLCTGDMGFGAAKTYDLEVWLPAQNTYREISSVSNCEAFQARRLQARFKNAQGKNELVHTLNGSGLAVGRTLVAVLENYQNEDGSVTIPEVLRPYMGGQATLPV.

Position 249-251 (Thr-249–Glu-251) interacts with L-serine. Arg-280–Glu-282 provides a ligand contact to ATP. Glu-303 contacts L-serine. Glu-367–Ser-370 lines the ATP pocket. Ser-402 provides a ligand contact to L-serine.

It belongs to the class-II aminoacyl-tRNA synthetase family. Type-1 seryl-tRNA synthetase subfamily. In terms of assembly, homodimer. The tRNA molecule binds across the dimer.

It is found in the cytoplasm. The catalysed reaction is tRNA(Ser) + L-serine + ATP = L-seryl-tRNA(Ser) + AMP + diphosphate + H(+). The enzyme catalyses tRNA(Sec) + L-serine + ATP = L-seryl-tRNA(Sec) + AMP + diphosphate + H(+). The protein operates within aminoacyl-tRNA biosynthesis; selenocysteinyl-tRNA(Sec) biosynthesis; L-seryl-tRNA(Sec) from L-serine and tRNA(Sec): step 1/1. Catalyzes the attachment of serine to tRNA(Ser). Is also able to aminoacylate tRNA(Sec) with serine, to form the misacylated tRNA L-seryl-tRNA(Sec), which will be further converted into selenocysteinyl-tRNA(Sec). This is Serine--tRNA ligase from Acidovorax ebreus (strain TPSY) (Diaphorobacter sp. (strain TPSY)).